We begin with the raw amino-acid sequence, 262 residues long: Elongator complex protein 5 (262 aa).

Disordered regions lie at residues 181–214 and 229–262; these read TPLD…FKIE and PYER…DLCI. The segment covering 200 to 211 has biased composition (polar residues); that stretch reads AEQTTEPASSTF. Over residues 246 to 262 the composition is skewed to acidic residues; it reads DADDDFDEEDPDEDLCI.

Belongs to the ELP5 family. As to quaternary structure, component of the elongator complex composed of Elp1, Elp2, Elp3, Elp4, Elp5 and Elp6. The elongator complex associates with and stabilizes microtubules; efficient interaction requires the full complex.

It is found in the cytoplasm. The protein localises to the nucleus. It localises to the cytoskeleton. The protein resides in the spindle. Its pathway is tRNA modification; 5-methoxycarbonylmethyl-2-thiouridine-tRNA biosynthesis. In terms of biological role, component of the elongator complex, which is required for multiple tRNA modifications, including mcm5U (5-methoxycarbonylmethyl uridine), mcm5s2U (5-methoxycarbonylmethyl-2-thiouridine), and ncm5U (5-carbamoylmethyl uridine). The elongator complex catalyzes the formation of carboxymethyluridine in the wobble base at position 34 in tRNAs. Binding by the elongator complex stabilizes microtubules and promotes their growth. This induces central spindle asymmetry, promoting polarized signaling endosome trafficking during asymmetric cell division and cell fate assignation of sensory organ precursor cells. In Drosophila melanogaster (Fruit fly), this protein is Elongator complex protein 5.